The chain runs to 252 residues: 2-succinyl-6-hydroxy-2,4-cyclohexadiene-1-carboxylate synthase (252 aa).

This sequence belongs to the AB hydrolase superfamily. MenH family. In terms of assembly, monomer.

The enzyme catalyses 5-enolpyruvoyl-6-hydroxy-2-succinyl-cyclohex-3-ene-1-carboxylate = (1R,6R)-6-hydroxy-2-succinyl-cyclohexa-2,4-diene-1-carboxylate + pyruvate. Its pathway is quinol/quinone metabolism; 1,4-dihydroxy-2-naphthoate biosynthesis; 1,4-dihydroxy-2-naphthoate from chorismate: step 3/7. It participates in quinol/quinone metabolism; menaquinone biosynthesis. In terms of biological role, catalyzes a proton abstraction reaction that results in 2,5-elimination of pyruvate from 2-succinyl-5-enolpyruvyl-6-hydroxy-3-cyclohexene-1-carboxylate (SEPHCHC) and the formation of 2-succinyl-6-hydroxy-2,4-cyclohexadiene-1-carboxylate (SHCHC). The chain is 2-succinyl-6-hydroxy-2,4-cyclohexadiene-1-carboxylate synthase from Escherichia coli (strain SMS-3-5 / SECEC).